We begin with the raw amino-acid sequence, 887 residues long: Beta-galactosidase 14 (887 aa).

An N-terminal signal peptide occupies residues 1-31 (MSKSSRIRMKSRTRYLIAILLVISLCSKASS). Catalysis depends on E197, which acts as the Proton donor. E268 functions as the Nucleophile in the catalytic mechanism. N-linked (GlcNAc...) asparagine glycosylation is found at N269, N300, N395, and N785. The 87-residue stretch at 752 to 838 (KDMRLKAVMR…KTLAVQVKCE (87 aa)) folds into the SUEL-type lectin domain. Over residues 838–852 (EKKEGKQDEKKKKED) the composition is skewed to basic and acidic residues. A disordered region spans residues 838–887 (EKKEGKQDEKKKKEDKDEEEEDDEDDDEEEEEEDKENKDTKDMENKNQDM). Over residues 853 to 871 (KDEEEEDDEDDDEEEEEED) the composition is skewed to acidic residues. Over residues 872–887 (KENKDTKDMENKNQDM) the composition is skewed to basic and acidic residues.

Belongs to the glycosyl hydrolase 35 family.

The protein resides in the secreted. It localises to the extracellular space. The protein localises to the apoplast. The enzyme catalyses Hydrolysis of terminal non-reducing beta-D-galactose residues in beta-D-galactosides.. This is Beta-galactosidase 14 (BGAL14) from Arabidopsis thaliana (Mouse-ear cress).